The chain runs to 201 residues: Peptidyl-tRNA hydrolase (201 aa).

Residue Tyr14 coordinates tRNA. The Proton acceptor role is filled by His19. TRNA-binding residues include Tyr64, Asn66, and Asn112.

It belongs to the PTH family. As to quaternary structure, monomer.

It is found in the cytoplasm. It carries out the reaction an N-acyl-L-alpha-aminoacyl-tRNA + H2O = an N-acyl-L-amino acid + a tRNA + H(+). In terms of biological role, hydrolyzes ribosome-free peptidyl-tRNAs (with 1 or more amino acids incorporated), which drop off the ribosome during protein synthesis, or as a result of ribosome stalling. Functionally, catalyzes the release of premature peptidyl moieties from peptidyl-tRNA molecules trapped in stalled 50S ribosomal subunits, and thus maintains levels of free tRNAs and 50S ribosomes. The sequence is that of Peptidyl-tRNA hydrolase from Rhodopseudomonas palustris (strain BisB18).